A 139-amino-acid chain; its full sequence is Transcription antitermination protein NusB (139 aa).

It belongs to the NusB family.

Functionally, involved in transcription antitermination. Required for transcription of ribosomal RNA (rRNA) genes. Binds specifically to the boxA antiterminator sequence of the ribosomal RNA (rrn) operons. This Cronobacter sakazakii (strain ATCC BAA-894) (Enterobacter sakazakii) protein is Transcription antitermination protein NusB.